The chain runs to 65 residues: Large ribosomal subunit protein bL35 (65 aa).

Over residues 1–15 (MPKMKTKKSASKRFT) the composition is skewed to basic residues. Disordered regions lie at residues 1–26 (MPKM…KRGQ) and 38–65 (TKNK…MPYA). The span at 45–54 (RGTEGVHETN) shows a compositional bias: basic and acidic residues.

Belongs to the bacterial ribosomal protein bL35 family.

The protein is Large ribosomal subunit protein bL35 of Ralstonia pickettii (strain 12J).